Here is an 820-residue protein sequence, read N- to C-terminus: SART-1 family protein DOT2 (820 aa).

Basic and acidic residues-rich tracts occupy residues 1 to 156 (MEVE…DNRG), 210 to 219 (EEKRNAEKQR), and 426 to 445 (LGSR…ERIE). Disordered regions lie at residues 1 to 177 (MEVE…SALD), 210 to 248 (EEKR…EHLS), 420 to 445 (GLGA…ERIE), 523 to 544 (SSTN…ENTV), 564 to 617 (KPES…PDEN), 657 to 678 (KLVG…SKDR), 729 to 748 (KLKQ…RMRE), and 762 to 820 (GHVK…RPKP). Serine 22 is subject to Phosphoserine. 3 coiled-coil regions span residues 58-120 (RDKE…EKEK), 171-235 (KEAS…NLNQ), and 433-510 (RRQA…KEEA). The segment covering 525-543 (TNQTTDDNTTTGDETQENT) has biased composition (low complexity). Residues 582–591 (VEVKEEHPDG) show a composition bias toward basic and acidic residues. The segment covering 596-606 (NDTDMDAAEDS) has biased composition (acidic residues). 2 stretches are compositionally biased toward basic and acidic residues: residues 607 to 617 (SDTKEITPDEN) and 665 to 678 (DGGK…SKDR). Polar residues-rich tracts occupy residues 733-744 (MKNSDTPSQSVQ) and 767-776 (GQTSDPQSGF). The segment covering 792-807 (GDRKVEHFLGIKRKSE) has biased composition (basic and acidic residues).

Belongs to the SNU66/SART1 family. In terms of tissue distribution, expressed in lateral root cap, columella, meristem and quiescent center (QC). Expressed in young leaves.

The protein resides in the nucleus. Plays a role in root, shoot and flower development. Probably required for normal root and shoot meristem organization and maintenance and the proper expression of PIN and PLT genes. Involved in leaf vasculature patterning. This is SART-1 family protein DOT2 from Arabidopsis thaliana (Mouse-ear cress).